The sequence spans 313 residues: Small ribosomal subunit protein uS2 (313 aa).

Over residues 228–256 the composition is skewed to basic and acidic residues; it reads RQEDKAAEAQDKDAQDTEDNKGARPRGAE. Positions 228–313 are disordered; the sequence is RQEDKAAEAQ…VSKAGDKPKK (86 aa).

Belongs to the universal ribosomal protein uS2 family.

The sequence is that of Small ribosomal subunit protein uS2 from Amoebophilus asiaticus (strain 5a2).